The primary structure comprises 345 residues: Glycosyltransferase 1 domain-containing protein 1 (345 aa).

Residues 1–19 form the signal peptide; the sequence is MKILFLACLRAHTGNSTTA. Residues N246 and N322 are each glycosylated (N-linked (GlcNAc...) asparagine).

This sequence belongs to the glycosyltransferase group 1 family. Glycosyltransferase 4 subfamily.

The protein resides in the secreted. This Xenopus tropicalis (Western clawed frog) protein is Glycosyltransferase 1 domain-containing protein 1 (glt1d1).